We begin with the raw amino-acid sequence, 242 residues long: Outer membrane protein class 4 (242 aa).

A signal peptide spans 1 to 22 (MTKQLKLSALFVALLASGTAVA). Repeat copies occupy residues 69-70 (AP), 71-72 (EP), 73-74 (EP), 75-76 (EP), 77-78 (EP), 79-80 (AP), and 81-82 (AP). The interval 69–82 (APEPEPEPEPAPAP) is 7 X 2 AA tandem repeats of X-P. The OmpA-like domain maps to 92-229 (YVDETISLSA…RVDVKIRSIV (138 aa)). C191 and C214 form a disulfide bridge.

It belongs to the outer membrane OOP (TC 1.B.6) superfamily.

The protein localises to the cell outer membrane. The polypeptide is Outer membrane protein class 4 (rmpM) (Neisseria meningitidis serogroup A / serotype 4A (strain DSM 15465 / Z2491)).